We begin with the raw amino-acid sequence, 299 residues long: Protoheme IX farnesyltransferase (299 aa).

9 helical membrane-spanning segments follow: residues 26–46 (VNAL…PDGL), 53–73 (FAAT…NCLI), 94–114 (LHSV…LSVL), 121–141 (LTMW…TLLL), 149–169 (IVIG…AVSG), 175–195 (ALLL…SLAL), 217–239 (YTRL…PFAI), 243–265 (GWIY…WRLL), and 277–297 (FRFS…DHYL).

This sequence belongs to the UbiA prenyltransferase family. Protoheme IX farnesyltransferase subfamily.

The protein resides in the cell inner membrane. The catalysed reaction is heme b + (2E,6E)-farnesyl diphosphate + H2O = Fe(II)-heme o + diphosphate. It functions in the pathway porphyrin-containing compound metabolism; heme O biosynthesis; heme O from protoheme: step 1/1. In terms of biological role, converts heme B (protoheme IX) to heme O by substitution of the vinyl group on carbon 2 of heme B porphyrin ring with a hydroxyethyl farnesyl side group. The sequence is that of Protoheme IX farnesyltransferase from Azoarcus sp. (strain BH72).